Consider the following 148-residue polypeptide: Probable calcium-binding protein CML7 (148 aa).

3 consecutive EF-hand domains span residues 9 to 44, 80 to 115, and 116 to 148; these read EQVASMREAFSLFDTDGDGRIAPSELGVLMRSLGGN, PFDRPLRDAFRVLDKDASGTVSVADLRHVLTSIGEK, and LEPHEFDEWIREVDVAPDGTIRYDDFIRRIVAK. Residues Asp-22, Asp-24, Asp-26, Arg-28, Glu-33, Asp-93, Asp-95, Ser-97, Thr-99, and Asp-104 each contribute to the Ca(2+) site.

Potential calcium sensor. In Oryza sativa subsp. japonica (Rice), this protein is Probable calcium-binding protein CML7 (CML7).